We begin with the raw amino-acid sequence, 348 residues long: Acetylesterase (348 aa).

A signal peptide spans 1–16; sequence MRSILVIPSFVAVLNA. 5 N-linked (GlcNAc...) asparagine glycosylation sites follow: N64, N165, N218, N223, and N297.

Belongs to the carbohydrate esterase CE16 family. N-glycosylated.

It localises to the secreted. The catalysed reaction is an acetyl ester + H2O = an aliphatic alcohol + acetate + H(+). In terms of biological role, acetylesterase that acts as an exo-deacetylase. Shows activity towards naphtyl acetate, triacetin, as well as towards glucose- and xylose acetates. Liberates acetic acid from xylo-oligomers. The chain is Acetylesterase from Hypocrea jecorina (Trichoderma reesei).